The chain runs to 154 residues: Nucleoside diphosphate kinase A1 (154 aa).

Residues Lys-13, Phe-61, Arg-89, Thr-95, Arg-106, and Asn-116 each contribute to the ATP site. His-119 acts as the Pros-phosphohistidine intermediate in catalysis.

This sequence belongs to the NDK family. Mg(2+) is required as a cofactor.

Its subcellular location is the cytoplasm. It carries out the reaction a 2'-deoxyribonucleoside 5'-diphosphate + ATP = a 2'-deoxyribonucleoside 5'-triphosphate + ADP. The enzyme catalyses a ribonucleoside 5'-diphosphate + ATP = a ribonucleoside 5'-triphosphate + ADP. In terms of biological role, major role in the synthesis of nucleoside triphosphates other than ATP. The ATP gamma phosphate is transferred to the NDP beta phosphate via a ping-pong mechanism, using a phosphorylated active-site intermediate. This is Nucleoside diphosphate kinase A1 from Xenopus laevis (African clawed frog).